A 165-amino-acid chain; its full sequence is MTVTLNRGSITSLMSSSQAVSTLQPAASELKTQLEHKLKSESAEKTREVLWQQYYASNPPDHAVLEVLATPVREALLARFGQHQGPVVPAIDLPELRSVLQQFDSFGKRREAILLQVLEGIKPNESQVGLPYLSELINKELMILLPYNSIVDSLLHNSHQIDMET.

Positions Thr-2–Thr-11 are 5' secretion signal. Residues Pro-131 to Ser-149 are 3' secretion signal.

The protein belongs to the YopR family.

It is found in the secreted. Functionally, may be involved in the regulation of the assembly of the type III secretion system (T3SS), also called injectisome, which is used to inject bacterial effector proteins into eukaryotic host cells. May control the secretion and/or polymerization of YscF/SctF, the principal component of the needle filament, thereby impacting the assembly of the T3SS. Involved in pathogenesis. Essential for the establishment of Yersinia infections in a mouse model system. The sequence is that of Type 3 secretion system regulator YopR from Yersinia enterocolitica.